The following is a 332-amino-acid chain: Leucine carboxyl methyltransferase 1 (332 aa).

Residues arginine 71, glycine 96, aspartate 120, 169–170, and glutamate 196 each bind S-adenosyl-L-methionine; that span reads DL.

It belongs to the methyltransferase superfamily. LCMT family.

The enzyme catalyses [phosphatase 2A protein]-C-terminal L-leucine + S-adenosyl-L-methionine = [phosphatase 2A protein]-C-terminal L-leucine methyl ester + S-adenosyl-L-homocysteine. Functionally, methylates the carboxyl group of the C-terminal leucine residue of protein phosphatase 2A catalytic subunits to form alpha-leucine ester residues. This Rattus norvegicus (Rat) protein is Leucine carboxyl methyltransferase 1 (Lcmt1).